Here is a 190-residue protein sequence, read N- to C-terminus: Hypoxanthine/guanine phosphoribosyltransferase (190 aa).

The protein belongs to the purine/pyrimidine phosphoribosyltransferase family. Archaeal HPRT subfamily. Homodimer.

It is found in the cytoplasm. The catalysed reaction is IMP + diphosphate = hypoxanthine + 5-phospho-alpha-D-ribose 1-diphosphate. It catalyses the reaction GMP + diphosphate = guanine + 5-phospho-alpha-D-ribose 1-diphosphate. It functions in the pathway purine metabolism; IMP biosynthesis via salvage pathway; IMP from hypoxanthine: step 1/1. Functionally, catalyzes a salvage reaction resulting in the formation of IMP that is energically less costly than de novo synthesis. The chain is Hypoxanthine/guanine phosphoribosyltransferase from Methanohalophilus mahii (strain ATCC 35705 / DSM 5219 / SLP).